The following is a 574-amino-acid chain: Polyamine aminopropyltransferase (574 aa).

7 helical membrane-spanning segments follow: residues Val22 to Leu42, Ala55 to Ala75, Leu90 to Gly110, Leu144 to Ala164, Ile188 to Leu208, Ala209 to Trp229, and Leu237 to Pro257. The segment at Ile254–His510 is spermidine synthase. One can recognise a PABS domain in the interval Pro257–Gly505. Residue Gln281 coordinates S-methyl-5'-thioadenosine. Positions 317 and 341 each coordinate spermidine. S-methyl-5'-thioadenosine is bound by residues Asp360 and Asp403–Ala404. Asp424 functions as the Proton acceptor in the catalytic mechanism.

It belongs to the spermidine/spermine synthase family. As to quaternary structure, homodimer or homotetramer.

The protein resides in the cell membrane. It carries out the reaction S-adenosyl 3-(methylsulfanyl)propylamine + putrescine = S-methyl-5'-thioadenosine + spermidine + H(+). It functions in the pathway amine and polyamine biosynthesis; spermidine biosynthesis; spermidine from putrescine: step 1/1. In terms of biological role, catalyzes the irreversible transfer of a propylamine group from the amino donor S-adenosylmethioninamine (decarboxy-AdoMet) to putrescine (1,4-diaminobutane) to yield spermidine. This chain is Polyamine aminopropyltransferase, found in Shewanella oneidensis (strain ATCC 700550 / JCM 31522 / CIP 106686 / LMG 19005 / NCIMB 14063 / MR-1).